The chain runs to 359 residues: Protein Wnt-5b (359 aa).

The first 17 residues, 1–17 (MPSLLLVVVAALLSSWA), serve as a signal peptide directing secretion. C83 and C94 are disulfide-bonded. 2 N-linked (GlcNAc...) asparagine glycosylation sites follow: N93 and N99. Cystine bridges form between C133–C141, C143–C161, C217–C231, C219–C226, C288–C319, C304–C314, C318–C358, C334–C349, C336–C346, and C341–C342. S223 carries the O-palmitoleoyl serine; by PORCN lipid modification. N-linked (GlcNAc...) asparagine glycans are attached at residues N291 and N305.

This sequence belongs to the Wnt family. As to quaternary structure, interacts with PORCN. Post-translationally, palmitoleoylation is required for efficient binding to frizzled receptors. Depalmitoleoylation leads to Wnt signaling pathway inhibition.

The protein localises to the secreted. It localises to the extracellular space. Its subcellular location is the extracellular matrix. Its function is as follows. Ligand for members of the frizzled family of seven transmembrane receptors. Probable developmental protein. May be a signaling molecule which affects the development of discrete regions of tissues. Is likely to signal over only few cell diameters. This is Protein Wnt-5b (Wnt5b) from Mus musculus (Mouse).